Consider the following 356-residue polypeptide: MDLEAKEISGNIPNENALAELCRLCESADLSQIENFVGRYKNWCLSIIWPRNCWLRFTPRKDVAGYTEKMFEDMDDHYQGFVEKLCLLGTIQIPYRDVPILIGRSKRIFLHDLETDTLHFVCDNFEQFVRYGVLGTNIITCAEPVYRHGLYEGPRFESLENLMNNDVLRSPYTLNVHVKLNRKGVLGIKAMRKHYIAMLREFDELARCASLDDVGRFVSLNVGRDLRLDMPVFKSLTLGTRDSVWTGTCRLANLKEQEDLVEKVVVLGYLNDHDYESKCTRPILCIGKSGKIYYYDWIDNVLVKLGDCLLTFLRVGFARLFADYGYEKIGKISMRFGRMSTLGMSETYQSCMSLSK.

It belongs to the herpesviridae US22 family.

The chain is Protein U8 (U8) from Homo sapiens (Human).